The chain runs to 392 residues: Mitochondrial distribution and morphology protein 10 (392 aa).

Belongs to the MDM10 family. As to quaternary structure, component of the ER-mitochondria encounter structure (ERMES) or MDM complex, composed of MMM1, MDM10, MDM12 and MDM34. Associates with the mitochondrial outer membrane sorting assembly machinery SAM(core) complex.

Its subcellular location is the mitochondrion outer membrane. Its function is as follows. Component of the ERMES/MDM complex, which serves as a molecular tether to connect the endoplasmic reticulum and mitochondria. Components of this complex are involved in the control of mitochondrial shape and protein biogenesis and may function in phospholipid exchange. MDM10 is involved in the late assembly steps of the general translocase of the mitochondrial outer membrane (TOM complex). Functions in the TOM40-specific route of the assembly of outer membrane beta-barrel proteins, including the association of TOM40 with the receptor TOM22 and small TOM proteins. Can associate with the SAM(core) complex as well as the MDM12-MMM1 complex, both involved in late steps of the major beta-barrel assembly pathway, that is responsible for biogenesis of all outer membrane beta-barrel proteins. May act as a switch that shuttles between both complexes and channels precursor proteins into the TOM40-specific pathway. Plays a role in mitochondrial morphology and in the inheritance of mitochondria. This is Mitochondrial distribution and morphology protein 10 from Phaeosphaeria nodorum (strain SN15 / ATCC MYA-4574 / FGSC 10173) (Glume blotch fungus).